A 396-amino-acid polypeptide reads, in one-letter code: MSGSSLRRVAVFGATGSIGASALDVIARHPERLRASVLSAGSKVDALLALCVLHRPAHAVIADAALYPALRDGLRAAGLTTQAHAGDQALDALAASDACDTVVAAIVGAAGLSSTLAAAAAGKRLLLANKESLVLAGELLTRTAAAAGAEIIPIDSEHSAIFQCLRSCDASRGVRRVILTASGGPFRGRQRAQLAEVTPAQAVAHPKWSMGPKISVDSATLMNKGLEVIEAHHLFGLPGEQIDVLVHPQSLVHSLVEFVDGSTLAQLGLPDMRTTLAVGLAWPERVESGVGGLDLLQQGRLDFEAPDTEAFPCLRLAWDALRAGGTAPAILNAANEVAVSAFLQGKVGFLAIPALVEHTLTTLQRQNADTLNALLFADAEARRTTERALAHHSLHA.

6 residues coordinate NADPH: T15, G16, S17, I18, G41, and N129. K130 is a binding site for 1-deoxy-D-xylulose 5-phosphate. E131 provides a ligand contact to NADPH. D155 is a Mn(2+) binding site. Residues S156, E157, S182, and H205 each coordinate 1-deoxy-D-xylulose 5-phosphate. Residue E157 coordinates Mn(2+). Residue G211 participates in NADPH binding. 1-deoxy-D-xylulose 5-phosphate is bound by residues S218, N223, K224, and E227. Position 227 (E227) interacts with Mn(2+).

The protein belongs to the DXR family. The cofactor is Mg(2+). Requires Mn(2+) as cofactor.

The enzyme catalyses 2-C-methyl-D-erythritol 4-phosphate + NADP(+) = 1-deoxy-D-xylulose 5-phosphate + NADPH + H(+). Its pathway is isoprenoid biosynthesis; isopentenyl diphosphate biosynthesis via DXP pathway; isopentenyl diphosphate from 1-deoxy-D-xylulose 5-phosphate: step 1/6. Its function is as follows. Catalyzes the NADPH-dependent rearrangement and reduction of 1-deoxy-D-xylulose-5-phosphate (DXP) to 2-C-methyl-D-erythritol 4-phosphate (MEP). The sequence is that of 1-deoxy-D-xylulose 5-phosphate reductoisomerase from Xanthomonas campestris pv. campestris (strain 8004).